We begin with the raw amino-acid sequence, 599 residues long: Elongation factor 4 (599 aa).

Residues E4–Q186 form the tr-type G domain. Residues D16–T21 and N133–D136 contribute to the GTP site.

Belongs to the TRAFAC class translation factor GTPase superfamily. Classic translation factor GTPase family. LepA subfamily.

Its subcellular location is the cell inner membrane. The enzyme catalyses GTP + H2O = GDP + phosphate + H(+). Required for accurate and efficient protein synthesis under certain stress conditions. May act as a fidelity factor of the translation reaction, by catalyzing a one-codon backward translocation of tRNAs on improperly translocated ribosomes. Back-translocation proceeds from a post-translocation (POST) complex to a pre-translocation (PRE) complex, thus giving elongation factor G a second chance to translocate the tRNAs correctly. Binds to ribosomes in a GTP-dependent manner. This is Elongation factor 4 from Geotalea uraniireducens (strain Rf4) (Geobacter uraniireducens).